The following is a 268-amino-acid chain: M1-specific T cell receptor alpha chain (268 aa).

The signal sequence occupies residues 1 to 19 (MVLKFSVSILWIQLAWVST). In terms of domain architecture, Ig-like V-type spans 20–107 (QLLEQSPQFL…QPGDTGLYLC (88 aa)). Residues 20 to 109 (QLLEQSPQFL…GDTGLYLCAG (90 aa)) form a t cell receptor alpha variable 27 region. Residues N36 and N42 are each glycosylated (N-linked (GlcNAc...) asparagine). A disulfide bond links C41 and C107. The tract at residues 45 to 49 (SVFSS) is CDR1. The segment at 67–69 (VVT) is CDR2. The interval 107–118 (CAGGGSQGNLIF) is CDR3. The interval 110-128 (GGSQGNLIFGKGTKLSVKP) is t cell receptor alpha joining 42. The tract at residues 129–268 (IQNPDPAVYQ…LLMTLRLWSS (140 aa)) is t cell receptor alpha constant. One can recognise an Ig-like C1-type domain in the interval 147-235 (KSVCLFTDFD…LVEKSFETDT (89 aa)). A disulfide bridge links C150 with C200. N-linked (GlcNAc...) asparagine glycosylation is found at N160, N194, N205, and N241. Residues 222–243 (CDVKLVEKSFETDTNLNFQNLS) form a connecting peptide region. The helical transmembrane segment at 244 to 266 (VIGFRILLLKVAGFNLLMTLRLW) threads the bilayer. Topologically, residues 267-268 (SS) are cytoplasmic.

In terms of assembly, disulfide-linked heterodimer with TRBV19*01J2S7*01C*02 beta chain. The TR primarily interacts via its CDR3-beta domain with M/matrix protein 1-derived peptide (GILGFVFTL) displayed by HLA-A*02.01 in a 'peg-notch' recognition mode. The alpha-beta TR associates with the transmembrane signaling CD3 coreceptor proteins to form the TR-CD3 (TCR). The assembly of alpha-beta TR heterodimers with CD3 occurs in the endoplasmic reticulum where a single alpha-beta TR heterodimer associates with one CD3D-CD3E heterodimer, one CD3G-CD3E heterodimer and one CD247 homodimer forming a stable octameric structure. CD3D-CD3E and CD3G-CD3E heterodimers preferentially associate with TR alpha and TR beta chains (via TM domain), respectively. The association of the CD247 homodimer is the last step of TCR assembly in the endoplasmic reticulum and is required for transport to the cell surface. As to expression, expressed in M/matrix protein 1-specific effector and memory CD8-positive T cells readily detectable in the peripheral blood, secondary lymphoid organs and lung (primary site of infection) of IAV infected individuals.

The protein resides in the cell membrane. In terms of biological role, the alpha chain of TRAV27*01J42*01C*01/TRBV19*01J2S7*01C*02 alpha-beta T cell receptor (TR) clonotype that is specific for HLA-A*02:01-restricted M/matrix protein 1 immunodominant epitope GILGFVFTL of influenza A virus (IAV). Classified as a public TR clonotype, it is preferentially selected in effector memory CD8-positive T cells among multiple HLA-A*02:01 carriers and confers long-lived immunity against IAV infection. Can cross-recognize sporadically emerging IAV variants by molecular mimicry, inducing immunity toward different influenza strains. Antigen recognition initiates TR-CD3 clustering on the cell surface and intracellular activation of LCK that phosphorylates the ITAM motifs of CD3G, CD3D, CD3E and CD247 enabling the recruitment of ZAP70. In turn, ZAP70 phosphorylates LAT, which recruits numerous signaling molecules to form the LAT signalosome. The LAT signalosome propagates signal branching to three major signaling pathways, the calcium, the mitogen-activated protein kinase (MAPK) kinase and the nuclear factor NF-kappa-B (NF-kB) pathways, leading to the mobilization of transcription factors that are critical for gene expression and essential for T cell differentiation into effector/memory T cells. The sequence is that of M1-specific T cell receptor alpha chain from Homo sapiens (Human).